A 232-amino-acid chain; its full sequence is UPF0173 metal-dependent hydrolase Msil_0741 (232 aa).

This sequence belongs to the UPF0173 family.

The chain is UPF0173 metal-dependent hydrolase Msil_0741 from Methylocella silvestris (strain DSM 15510 / CIP 108128 / LMG 27833 / NCIMB 13906 / BL2).